The primary structure comprises 443 residues: Acyl transferase 10 (443 aa).

Residues His-182 and Asp-386 each act as proton acceptor in the active site.

The protein belongs to the plant acyltransferase family.

Involved in the incorporation of ferulate into the cell wall. May act as arabinoxylan feruloyl transferase. May function as p-coumaroyl-CoA transferase involved in glucuronoarabinoxylan modification. This is Acyl transferase 10 from Oryza sativa subsp. japonica (Rice).